We begin with the raw amino-acid sequence, 548 residues long: MSQFAEFKLPAIKNEPPKHYGPNSADREGIVKAYKELEAELPVTIPVIIDGKEVETNTIGEQRCPFEHKKVVARYHRAGAKHVEDAIEAALRGKKVWESLPFADRSAIFLKAAHLISTKYRYKLMAATMIGQGKNIWQAEIDAGMEIIDFLRFNTKYASELYASQPPENTPGVWNRMEYRPLEGFVYAITPFNFTAIAGNLAAAPLLMGNVVLMKPSDHAVLSSYIVYQIFREAGLPAGALQFIPGDAVEVSKVCFNHPEFAGLHFTGSTAVFRSLWGTIGENVANGKYRTYPKIVGETGGKNFHLVHSSAEIKSAVVNAVRAAFEYQGQKCSALSRLYVSKYAWENGFRDELTKQVKSLKVGAPLTDFANFVGPVIHQASFNKLKKVLESAASDSEIEVLAGGKADDSEGFFVEPTVLLSKNPKHDIFVNELFGPVLSVYVYEDDNLDAVCDLIDTTTPYGLTGSIFAQDRVVVRKLTDRLRNAAGNFYINDKCTGAVVGEQPFGGARASGTNDKAGSGMILSRFVSPRSIKDTFAYADSVLYPSNF.

The active-site Proton acceptor is the Glu-298. Cys-332 (nucleophile) is an active-site residue. Ser-391, Ser-394, and Ser-396 each carry phosphoserine.

It belongs to the aldehyde dehydrogenase family.

It catalyses the reaction L-glutamate 5-semialdehyde + NAD(+) + H2O = L-glutamate + NADH + 2 H(+). The protein operates within amino-acid degradation; L-proline degradation into L-glutamate; L-glutamate from L-proline: step 2/2. In Schizosaccharomyces pombe (strain 972 / ATCC 24843) (Fission yeast), this protein is Probable delta-1-pyrroline-5-carboxylate dehydrogenase.